The sequence spans 341 residues: Protein FAM50A (341 aa).

Disordered stretches follow at residues 1–27 and 80–147; these read MAQY…EREQ and LVKE…EIEE. Residues 80–115 are compositionally biased toward basic and acidic residues; sequence LVKEREKQLAKKEQSKELQLKLEKQKEKKRKEEQKR. Over residues 125–147 the composition is skewed to acidic residues; sequence DEGEDEEEEEEEEEEEEEDEIEE.

It belongs to the FAM50 family.

It localises to the nucleus. Functionally, probably involved in the regulation of pre-mRNA splicing. The chain is Protein FAM50A (fam50a) from Danio rerio (Zebrafish).